The following is a 670-amino-acid chain: Proline-rich receptor-like protein kinase PERK5 (670 aa).

The tract at residues 1 to 181 (MADSPVDSSP…SGDSDSSSGN (181 aa)) is disordered. The Extracellular portion of the chain corresponds to 1 to 186 (MADSPVDSSP…SSSGNHPQAN (186 aa)). Over residues 14-31 (TSNGTPPSNGTSPSNESS) the composition is skewed to low complexity. Asparagine 22 and asparagine 28 each carry an N-linked (GlcNAc...) asparagine glycan. Pro residues-rich tracts occupy residues 32–62 (PPTPPSSPPPSSISAPPPDISASFSPPPAPP) and 84–109 (PQTPENPSPPAPEGSTPVTPPAPPQT). Asparagine 130 carries N-linked (GlcNAc...) asparagine glycosylation. Residues 132–141 (TNGGNNNRDG) are compositionally biased toward low complexity. A glycan (N-linked (GlcNAc...) asparagine) is linked at asparagine 151. Low complexity predominate over residues 167 to 181 (SPPQNSGDSDSSSGN). Residues 187–207 (IGLIIGVLVGAGLLLLLAVCI) traverse the membrane as a helical segment. Topologically, residues 208-670 (CICCNRKKKK…RGSMKRNPQL (463 aa)) are cytoplasmic. Threonine 301 carries the post-translational modification Phosphothreonine. One can recognise a Protein kinase domain in the interval 312–590 (FAQSNLLGQG…VRALEGDMSM (279 aa)). ATP contacts are provided by residues 318-326 (LGQGGFGYV) and lysine 340. Phosphotyrosine is present on tyrosine 385. Aspartate 436 acts as the Proton acceptor in catalysis. Serine 469 is modified (phosphoserine). 2 positions are modified to phosphothreonine: threonine 470 and threonine 475. Tyrosine 483 carries the phosphotyrosine modification. Disordered stretches follow at residues 589–613 (SMDDLSEGTRPGQSTYLSPGSVSSE) and 635–670 (EYQSSEYGGTSEYGLNPSASSSEEMNRGSMKRNPQL). Polar residues predominate over residues 599-613 (PGQSTYLSPGSVSSE).

It belongs to the protein kinase superfamily. Ser/Thr protein kinase family. In terms of tissue distribution, mostly expressed in flower buds.

Its subcellular location is the cell membrane. The enzyme catalyses L-seryl-[protein] + ATP = O-phospho-L-seryl-[protein] + ADP + H(+). The catalysed reaction is L-threonyl-[protein] + ATP = O-phospho-L-threonyl-[protein] + ADP + H(+). The sequence is that of Proline-rich receptor-like protein kinase PERK5 (PERK5) from Arabidopsis thaliana (Mouse-ear cress).